The chain runs to 96 residues: Putative pterin-4-alpha-carbinolamine dehydratase (96 aa).

Belongs to the pterin-4-alpha-carbinolamine dehydratase family.

It carries out the reaction (4aS,6R)-4a-hydroxy-L-erythro-5,6,7,8-tetrahydrobiopterin = (6R)-L-erythro-6,7-dihydrobiopterin + H2O. The chain is Putative pterin-4-alpha-carbinolamine dehydratase from Rhodospirillum rubrum (strain ATCC 11170 / ATH 1.1.1 / DSM 467 / LMG 4362 / NCIMB 8255 / S1).